The following is a 65-amino-acid chain: VVYTDCTESGQNLCLCQGSNVCGQGNKCILGSNGEKNQCVTGEGTPKPQSHNDGDFEEIPEEYLQ.

The interval 1–3 (VVY) is interaction with thrombin active site. 3 cysteine pairs are disulfide-bonded: Cys-6–Cys-14, Cys-16–Cys-28, and Cys-22–Cys-39. Residues 40 to 65 (VTGEGTPKPQSHNDGDFEEIPEEYLQ) form a disordered region. Thr-45 carries an O-linked (GalNAc...) threonine glycan. Residues 55 to 65 (DFEEIPEEYLQ) are interaction with fibrinogen-binding exosite of thrombin. Acidic residues predominate over residues 55–65 (DFEEIPEEYLQ). Tyr-63 is subject to Sulfotyrosine.

It belongs to the protease inhibitor I14 (hirudin) family.

It is found in the secreted. Hirudin is a potent thrombin-specific protease inhibitor. It forms a stable non-covalent complex with alpha-thrombin, thereby abolishing its ability to cleave fibrinogen. This is Hirudin-3B' from Hirudo medicinalis (Medicinal leech).